Consider the following 484-residue polypeptide: Hexokinase-2 (484 aa).

Residues 21–467 (PQLLEALKPI…SGVGAAVIAA (447 aa)) form the Hexokinase domain. The tract at residues 75-208 (TGKETGSYLA…GVPIDVVALI (134 aa)) is hexokinase small subdomain. A hexokinase large subdomain region spans residues 209-456 (NDTTGTLVAS…DPIIIVPAED (248 aa)).

Belongs to the hexokinase family. As to quaternary structure, monomer.

It is found in the cytoplasm. The enzyme catalyses a D-hexose + ATP = a D-hexose 6-phosphate + ADP + H(+). It carries out the reaction D-fructose + ATP = D-fructose 6-phosphate + ADP + H(+). It catalyses the reaction D-glucose + ATP = D-glucose 6-phosphate + ADP + H(+). The protein operates within carbohydrate metabolism; hexose metabolism. Its pathway is carbohydrate degradation; glycolysis; D-glyceraldehyde 3-phosphate and glycerone phosphate from D-glucose: step 1/4. Functionally, catalyzes the phosphorylation of hexose, such as D-glucose and D-fructose, to hexose 6-phosphate (D-glucose 6-phosphate and D-fructose 6-phosphate, respectively). Mediates the initial step of glycolysis by catalyzing phosphorylation of D-glucose to D-glucose 6-phosphate. This chain is Hexokinase-2 (HXK2), found in Candida albicans (strain SC5314 / ATCC MYA-2876) (Yeast).